We begin with the raw amino-acid sequence, 78 residues long: Small ribosomal subunit protein bS18 (78 aa).

The protein belongs to the bacterial ribosomal protein bS18 family. As to quaternary structure, part of the 30S ribosomal subunit. Forms a tight heterodimer with protein bS6.

Binds as a heterodimer with protein bS6 to the central domain of the 16S rRNA, where it helps stabilize the platform of the 30S subunit. In Thermobifida fusca (strain YX), this protein is Small ribosomal subunit protein bS18.